Here is a 278-residue protein sequence, read N- to C-terminus: Large ribosomal subunit protein uL2 (278 aa).

The interval 223–278 is disordered; that stretch reads GSVMNPNDHPHGGGEGKAPIGHPSPMSPWGKKTLGKKTRDHKAKSEKFIVRHRRAK. Residues 255 to 264 are compositionally biased toward basic residues; that stretch reads TLGKKTRDHK.

The protein belongs to the universal ribosomal protein uL2 family. Part of the 50S ribosomal subunit. Forms a bridge to the 30S subunit in the 70S ribosome.

In terms of biological role, one of the primary rRNA binding proteins. Required for association of the 30S and 50S subunits to form the 70S ribosome, for tRNA binding and peptide bond formation. It has been suggested to have peptidyltransferase activity; this is somewhat controversial. Makes several contacts with the 16S rRNA in the 70S ribosome. The protein is Large ribosomal subunit protein uL2 of Lacticaseibacillus paracasei (strain ATCC 334 / BCRC 17002 / CCUG 31169 / CIP 107868 / KCTC 3260 / NRRL B-441) (Lactobacillus paracasei).